The sequence spans 120 residues: 2-amino-4-hydroxy-6-hydroxymethyldihydropteridine pyrophosphokinase (120 aa).

This sequence belongs to the HPPK family.

The enzyme catalyses 6-hydroxymethyl-7,8-dihydropterin + ATP = (7,8-dihydropterin-6-yl)methyl diphosphate + AMP + H(+). It participates in cofactor biosynthesis; tetrahydrofolate biosynthesis; 2-amino-4-hydroxy-6-hydroxymethyl-7,8-dihydropteridine diphosphate from 7,8-dihydroneopterin triphosphate: step 4/4. Its function is as follows. Catalyzes the transfer of pyrophosphate from adenosine triphosphate (ATP) to 6-hydroxymethyl-7,8-dihydropterin, an enzymatic step in folate biosynthesis pathway. This chain is 2-amino-4-hydroxy-6-hydroxymethyldihydropteridine pyrophosphokinase (folK), found in Pseudomonas putida (Arthrobacter siderocapsulatus).